The primary structure comprises 142 residues: MALAVNFKTYVDQACRAAEEFVNIYYETMDKRRHALVRLYLDKATLIWNGNVVTGLEALANFFEMLPSSEFQINMLDCQPVHEQATQCQTTVLVVTSGVVKFDGNKQHFFNQNFLLTAQSTPNSTVWKIASDCFRFQDWASI.

One can recognise an NTF2 domain in the interval 17–136 (AAEEFVNIYY…WKIASDCFRF (120 aa)).

In terms of assembly, associates with NXF1, NXF2, NXF3 and NXF5.

It is found in the nucleus. It localises to the cytoplasm. Functionally, regulator of protein export for NES-containing proteins. Also plays a role in mRNA nuclear export. This chain is NTF2-related export protein 2 (Nxt2), found in Mus musculus (Mouse).